A 360-amino-acid polypeptide reads, in one-letter code: MPTHRVALIFGGQSTEHEISIISARAIANHIDTEAYELYPIYVGHDGAWFKGETAQKVLDLDMPAMLANTSADTIRERLREISFSDPRNRFLFDFSEEGIDVALPIIHGSTGEDGKIQGLLDMFSVPYTGCGVHASAMTMDKETTKICAEHAGLHIAPYTTIRKLRYQQDPQQVVSVILEEFTLPFFVKPASQGSSIGITKVHRPEELAAALEKAFMVDTKVLIEKTIEGREIEVAVLGNDSPVASVPGEVEPGGDFYDFTDKYINGKASLHIPARLPEEVLQKVSTEALKAYRALECRGMSRVDFFIEHATGKIILNEINTVPGFTGISMYPMMMDASGIDFSQLIDRLLQLALEKTLS.

In terms of domain architecture, ATP-grasp spans 146–352; sequence KICAEHAGLH…FSQLIDRLLQ (207 aa). 179-234 is an ATP binding site; the sequence is LEEFTLPFFVKPASQGSSIGITKVHRPEELAAALEKAFMVDTKVLIEKTIEGREIE. 3 residues coordinate Mg(2+): Asp305, Glu319, and Asn321.

The protein belongs to the D-alanine--D-alanine ligase family. It depends on Mg(2+) as a cofactor. Mn(2+) is required as a cofactor.

The protein localises to the cytoplasm. The enzyme catalyses 2 D-alanine + ATP = D-alanyl-D-alanine + ADP + phosphate + H(+). It participates in cell wall biogenesis; peptidoglycan biosynthesis. Functionally, cell wall formation. The protein is D-alanine--D-alanine ligase of Prosthecochloris aestuarii (strain DSM 271 / SK 413).